We begin with the raw amino-acid sequence, 420 residues long: UDP-N-acetylglucosamine 1-carboxyvinyltransferase (420 aa).

22–23 (KN) is a phosphoenolpyruvate binding site. Position 93 (R93) interacts with UDP-N-acetyl-alpha-D-glucosamine. The active-site Proton donor is the C117. C117 is modified (2-(S-cysteinyl)pyruvic acid O-phosphothioketal). UDP-N-acetyl-alpha-D-glucosamine is bound by residues D307 and V329.

This sequence belongs to the EPSP synthase family. MurA subfamily.

It is found in the cytoplasm. The enzyme catalyses phosphoenolpyruvate + UDP-N-acetyl-alpha-D-glucosamine = UDP-N-acetyl-3-O-(1-carboxyvinyl)-alpha-D-glucosamine + phosphate. The protein operates within cell wall biogenesis; peptidoglycan biosynthesis. Functionally, cell wall formation. Adds enolpyruvyl to UDP-N-acetylglucosamine. In Marinobacter nauticus (strain ATCC 700491 / DSM 11845 / VT8) (Marinobacter aquaeolei), this protein is UDP-N-acetylglucosamine 1-carboxyvinyltransferase.